Here is a 336-residue protein sequence, read N- to C-terminus: Foldase protein PrsA (336 aa).

A signal peptide spans 1-22 (MKSAKKLLSVLCLGIFILTFTA). Residue cysteine 23 is the site of N-palmitoyl cysteine attachment. Cysteine 23 carries S-diacylglycerol cysteine lipidation. The region spanning 194-286 (PNTMNVSHIL…FGYHIIKINS (93 aa)) is the PpiC domain.

It belongs to the PrsA family.

It is found in the cell membrane. It carries out the reaction [protein]-peptidylproline (omega=180) = [protein]-peptidylproline (omega=0). In terms of biological role, plays a major role in protein secretion by helping the post-translocational extracellular folding of several secreted proteins. This chain is Foldase protein PrsA, found in Clostridium botulinum (strain 657 / Type Ba4).